The chain runs to 312 residues: Heterotepalin-4 (312 aa).

Positions 1-22 (MKSMLVVTISVWLILAPTSTWA) are cleaved as a signal peptide. 2 disulfides stabilise this stretch: cysteine 56/cysteine 280 and cysteine 107/cysteine 128. Glutamate 197 is a catalytic residue. Positions 284–312 (YNQNAMFPQLIMSTYYNYMANLGDLFEEF) are excised as a propeptide.

The enzyme catalyses Endohydrolysis of the N-glycosidic bond at one specific adenosine on the 28S rRNA.. In terms of biological role, inhibits protein synthesis in vitro. This Phytolacca heterotepala (Mexican pokeweed) protein is Heterotepalin-4.